Here is a 707-residue protein sequence, read N- to C-terminus: Ribosomal RNA large subunit methyltransferase K/L (707 aa).

Residues 44–155 (VIYNLCLWSR…NDILTVSFDL (112 aa)) enclose the THUMP domain.

Belongs to the methyltransferase superfamily. RlmKL family.

The protein localises to the cytoplasm. The enzyme catalyses guanosine(2445) in 23S rRNA + S-adenosyl-L-methionine = N(2)-methylguanosine(2445) in 23S rRNA + S-adenosyl-L-homocysteine + H(+). It catalyses the reaction guanosine(2069) in 23S rRNA + S-adenosyl-L-methionine = N(2)-methylguanosine(2069) in 23S rRNA + S-adenosyl-L-homocysteine + H(+). Specifically methylates the guanine in position 2445 (m2G2445) and the guanine in position 2069 (m7G2069) of 23S rRNA. The chain is Ribosomal RNA large subunit methyltransferase K/L from Legionella pneumophila (strain Paris).